The primary structure comprises 175 residues: Large ribosomal subunit protein uL10 (175 aa).

It belongs to the universal ribosomal protein uL10 family. As to quaternary structure, part of the ribosomal stalk of the 50S ribosomal subunit. The N-terminus interacts with L11 and the large rRNA to form the base of the stalk. The C-terminus forms an elongated spine to which L12 dimers bind in a sequential fashion forming a multimeric L10(L12)X complex.

In terms of biological role, forms part of the ribosomal stalk, playing a central role in the interaction of the ribosome with GTP-bound translation factors. The chain is Large ribosomal subunit protein uL10 from Desulfotalea psychrophila (strain LSv54 / DSM 12343).